The chain runs to 302 residues: Quinolinate synthase (302 aa).

Iminosuccinate is bound by residues His24 and Ser41. Cys86 is a binding site for [4Fe-4S] cluster. Residues 112–114 and Ser129 each bind iminosuccinate; that span reads YVN. A [4Fe-4S] cluster-binding site is contributed by Cys173. Residues 199-201 and Thr216 each bind iminosuccinate; that span reads HPE. Cys259 is a binding site for [4Fe-4S] cluster.

This sequence belongs to the quinolinate synthase family. Type 2 subfamily. Requires [4Fe-4S] cluster as cofactor.

Its subcellular location is the cytoplasm. The enzyme catalyses iminosuccinate + dihydroxyacetone phosphate = quinolinate + phosphate + 2 H2O + H(+). It functions in the pathway cofactor biosynthesis; NAD(+) biosynthesis; quinolinate from iminoaspartate: step 1/1. In terms of biological role, catalyzes the condensation of iminoaspartate with dihydroxyacetone phosphate to form quinolinate. This Thermococcus kodakarensis (strain ATCC BAA-918 / JCM 12380 / KOD1) (Pyrococcus kodakaraensis (strain KOD1)) protein is Quinolinate synthase.